The following is a 117-amino-acid chain: Large ribosomal subunit protein bL20 (117 aa).

It belongs to the bacterial ribosomal protein bL20 family.

Its function is as follows. Binds directly to 23S ribosomal RNA and is necessary for the in vitro assembly process of the 50S ribosomal subunit. It is not involved in the protein synthesizing functions of that subunit. This is Large ribosomal subunit protein bL20 from Leptospira interrogans serogroup Icterohaemorrhagiae serovar copenhageni (strain Fiocruz L1-130).